Consider the following 397-residue polypeptide: Pectate lyase 4 (397 aa).

The N-terminal stretch at 1-25 (MGIKHCCYILYFTLALVTLVQAGRL) is a signal peptide. N-linked (GlcNAc...) asparagine glycosylation is present at asparagine 36. Cysteine 54 and cysteine 71 form a disulfide bridge. PbH1 repeat units lie at residues 159–202 (VKNV…HVTG), 203–224 (SSDIWIDHCTLSKSFDGLVDVN), and 227–248 (STGVTISNCKFTHHEKAVLLGA). Positions 194, 218, and 222 each coordinate Ca(2+). Arginine 274 is a catalytic residue.

Belongs to the polysaccharide lyase 1 family. Amb a subfamily. Monomer. It depends on Ca(2+) as a cofactor. Post-translationally, the N-terminus is blocked. As to expression, pollen and flowers.

The catalysed reaction is Eliminative cleavage of (1-&gt;4)-alpha-D-galacturonan to give oligosaccharides with 4-deoxy-alpha-D-galact-4-enuronosyl groups at their non-reducing ends.. Its pathway is glycan metabolism; pectin degradation; 2-dehydro-3-deoxy-D-gluconate from pectin: step 2/5. Has pectate lyase activity. In Ambrosia artemisiifolia (Common ragweed), this protein is Pectate lyase 4.